A 154-amino-acid chain; its full sequence is MQALVQVRGPVDMSRDIQDTLEMLNIHSVNHCALVPETDTYSGMVAKVNDYVAFGEPSEAVLTDLIESRGEPASGAGDVDDAWVAEHTEYDDVADLAGALLAEETTLSDAGLAPVIRLHPPRGGHDGIKTPASDGGQLGKHTTEEIDHLLTDMR.

The segment at 122-141 (RGGHDGIKTPASDGGQLGKH) is disordered.

The protein belongs to the universal ribosomal protein uL30 family. As to quaternary structure, part of the 50S ribosomal subunit.

The chain is Large ribosomal subunit protein uL30 from Halobacterium salinarum (strain ATCC 29341 / DSM 671 / R1).